The primary structure comprises 73 residues: Putative defensin-like protein 277 (73 aa).

Residues 1–24 form the signal peptide; the sequence is MSAQKIYLASLLLFICLVFPQSTA. Intrachain disulfides connect C27-C64, C33-C52, C39-C62, and C43-C63.

It belongs to the DEFL family.

It is found in the secreted. In Arabidopsis thaliana (Mouse-ear cress), this protein is Putative defensin-like protein 277.